Reading from the N-terminus, the 657-residue chain is tRNA 5-methylaminomethyl-2-thiouridine biosynthesis bifunctional protein MnmC (657 aa).

The tRNA (mnm(5)s(2)U34)-methyltransferase stretch occupies residues 1-239 (MTDRIVPATL…KRAMLVGEFA (239 aa)). Positions 263-657 (IGAGLAGCAV…VRALRHGRVA (395 aa)) are FAD-dependent cmnm(5)s(2)U34 oxidoreductase.

This sequence in the N-terminal section; belongs to the methyltransferase superfamily. tRNA (mnm(5)s(2)U34)-methyltransferase family. The protein in the C-terminal section; belongs to the DAO family. FAD is required as a cofactor.

Its subcellular location is the cytoplasm. It carries out the reaction 5-aminomethyl-2-thiouridine(34) in tRNA + S-adenosyl-L-methionine = 5-methylaminomethyl-2-thiouridine(34) in tRNA + S-adenosyl-L-homocysteine + H(+). Catalyzes the last two steps in the biosynthesis of 5-methylaminomethyl-2-thiouridine (mnm(5)s(2)U) at the wobble position (U34) in tRNA. Catalyzes the FAD-dependent demodification of cmnm(5)s(2)U34 to nm(5)s(2)U34, followed by the transfer of a methyl group from S-adenosyl-L-methionine to nm(5)s(2)U34, to form mnm(5)s(2)U34. This chain is tRNA 5-methylaminomethyl-2-thiouridine biosynthesis bifunctional protein MnmC, found in Burkholderia mallei (strain SAVP1).